We begin with the raw amino-acid sequence, 427 residues long: Serine hydroxymethyltransferase (427 aa).

Position 120-122 (120-122) interacts with (6S)-5,6,7,8-tetrahydrofolate; the sequence is GHI. At Lys-226 the chain carries N6-(pyridoxal phosphate)lysine.

This sequence belongs to the SHMT family. As to quaternary structure, homodimer. It depends on pyridoxal 5'-phosphate as a cofactor.

It is found in the cytoplasm. It participates in amino-acid biosynthesis; glycine biosynthesis; glycine from L-serine: step 1/1. In terms of biological role, catalyzes the reversible interconversion of serine and glycine with a modified folate serving as the one-carbon carrier. Also exhibits a pteridine-independent aldolase activity toward beta-hydroxyamino acids, producing glycine and aldehydes, via a retro-aldol mechanism. The sequence is that of Serine hydroxymethyltransferase from Pyrococcus abyssi (strain GE5 / Orsay).